A 198-amino-acid chain; its full sequence is Ras-like protein 2 (198 aa).

18-25 is a binding site for GTP; sequence GDGGVGKS. The Effector region signature appears at 40–48; sequence YDPTIEDSY. Residues 65-69 and 124-127 each bind GTP; these read DTAGQ and NKCD. C195 is subject to Cysteine methyl ester. C195 carries S-farnesyl cysteine lipidation. Residues 196 to 198 constitute a propeptide, removed in mature form; sequence IVM.

The protein belongs to the small GTPase superfamily. Ras family.

It is found in the cell membrane. The enzyme catalyses GTP + H2O = GDP + phosphate + H(+). With respect to regulation, alternates between an inactive form bound to GDP and an active form bound to GTP. Activated by a guanine nucleotide-exchange factor (GEF) and inactivated by a GTPase-activating protein (GAP). The chain is Ras-like protein 2 (RAS2) from Mucor circinelloides f. lusitanicus (Mucor racemosus var. lusitanicus).